A 185-amino-acid chain; its full sequence is DNA-directed RNA polymerase 22 kDa subunit (185 aa).

This sequence belongs to the poxviridae DNA-directed RNA polymerase 22 kDa subunit family. As to quaternary structure, the DNA-dependent RNA polymerase used for intermediate and late genes expression consists of eight subunits Rpo30/OPG66, Rpo7/OPG90, Rpo22/OPG103, Rpo147/OPG105, Rpo18/OPG119, Rpo19/OPG131, Rpo132/OPG151 and Rpo35/OPG156. The same holoenzyme, with the addition of the transcription-specificity factor OPG109, is used for early gene expression.

It localises to the virion. It catalyses the reaction RNA(n) + a ribonucleoside 5'-triphosphate = RNA(n+1) + diphosphate. In terms of biological role, part of the DNA-dependent RNA polymerase which catalyzes the transcription of viral DNA into RNA using the four ribonucleoside triphosphates as substrates. Responsible for the transcription of early, intermediate and late genes. DNA-dependent RNA polymerase associates with the early transcription factor (ETF), itself composed of OPG118 and OPG133, thereby allowing the early genes transcription. Late transcription, and probably also intermediate transcription, require newly synthesized RNA polymerase. In Cynomys gunnisoni (Gunnison's prairie dog), this protein is DNA-directed RNA polymerase 22 kDa subunit (OPG103).